A 388-amino-acid chain; its full sequence is Pectin acetylesterase 1 (388 aa).

An N-terminal signal peptide occupies residues 1–24 (MKTLLYWGWSSLAGLILFSILAHG). Residues asparagine 30 and asparagine 33 are each glycosylated (N-linked (GlcNAc...) asparagine). Residues serine 187 and aspartate 283 each act as charge relay system in the active site. The N-linked (GlcNAc...) asparagine glycan is linked to asparagine 304. The active-site Charge relay system is the histidine 349.

It belongs to the pectinacetylesterase family.

It is found in the secreted. The protein localises to the cell wall. In terms of biological role, hydrolyzes acetyl esters in homogalacturonan regions of pectin. In type I primary cell wall, galacturonic acid residues of pectin can be acetylated at the O-2 and O-3 positions. Decreasing the degree of acetylation of pectin gels in vitro alters their physical properties. In Arabidopsis thaliana (Mouse-ear cress), this protein is Pectin acetylesterase 1.